Consider the following 65-residue polypeptide: UPF0337 protein gbs1203 (65 aa).

A compositionally biased stretch (basic and acidic residues) spans 1 to 12 (MSEEKFDAKVDK). The interval 1-29 (MSEEKFDAKVDKVSGSVKESVGKLTGDKE) is disordered.

Belongs to the UPF0337 (CsbD) family.

The sequence is that of UPF0337 protein gbs1203 from Streptococcus agalactiae serotype III (strain NEM316).